The sequence spans 603 residues: Complement factor I (603 aa).

The N-terminal stretch at M1–S18 is a signal peptide. Intrachain disulfides connect C36-C260, C46-C57, C51-C62, C64-C96, C70-C89, C78-C109, C144-C186, C157-C219, C191-C201, C234-C252, C246-C261, C264-C276, C271-C289, C283-C298, C348-C473, C386-C402, C394-C464, C487-C551, C515-C530, and C541-C570. One can recognise a Kazal-like domain in the interval I58 to A111. N106, N116, N174, and N182 each carry an N-linked (GlcNAc...) asparagine glycan. Residues V117–V217 form the SRCR domain. 2 LDL-receptor class A domains span residues V218–K262 and G263–E299. Ca(2+)-binding residues include K244, N247, V249, D251, D257, and E258. N-linked (GlcNAc...) asparagine glycosylation is present at N267. The Ca(2+) site is built by Y281, N284, E286, D288, D294, and E295. One can recognise a Peptidase S1 domain in the interval V361–G594. Residues H401 and D449 each act as charge relay system in the active site. Residue N514 is glycosylated (N-linked (GlcNAc...) asparagine). The active-site Charge relay system is the S545. N556 carries an N-linked (GlcNAc...) asparagine glycan.

It belongs to the peptidase S1 family. Heterodimer of a light and heavy chains; disulfide-linked. The fully processed and mature protein circulates as a zymogen, and is allosterically activated by substrate-induced remodeling of the active site. Interacts with C3b. Interacts with complement factor H. Expressed in the liver by hepatocytes. Also present in other cells such as monocytes, fibroblasts or keratinocytes.

The protein localises to the secreted. It localises to the extracellular space. The catalysed reaction is Inactivates complement subcomponents C3b, iC3b and C4b by proteolytic cleavage.. In terms of biological role, trypsin-like serine protease that plays an essential role in regulating the immune response by controlling all complement pathways. Inhibits these pathways by cleaving three peptide bonds in the alpha-chain of C3b and two bonds in the alpha-chain of C4b thereby inactivating these proteins. Essential cofactors for these reactions include factor H and C4BP in the fluid phase and membrane cofactor protein/CD46 and CR1 on cell surfaces. The presence of these cofactors on healthy cells allows degradation of deposited C3b by CFI in order to prevent undesired complement activation, while in apoptotic cells or microbes, the absence of such cofactors leads to C3b-mediated complement activation and subsequent opsonization. This chain is Complement factor I (Cfi), found in Mus musculus (Mouse).